A 249-amino-acid polypeptide reads, in one-letter code: Demethylmenaquinone methyltransferase (249 aa).

S-adenosyl-L-methionine contacts are provided by residues T67, D87, and 115-116 (DA).

This sequence belongs to the class I-like SAM-binding methyltransferase superfamily. MenG/UbiE family.

The catalysed reaction is a 2-demethylmenaquinol + S-adenosyl-L-methionine = a menaquinol + S-adenosyl-L-homocysteine + H(+). Its pathway is quinol/quinone metabolism; menaquinone biosynthesis; menaquinol from 1,4-dihydroxy-2-naphthoate: step 2/2. Its function is as follows. Methyltransferase required for the conversion of demethylmenaquinol (DMKH2) to menaquinol (MKH2). The chain is Demethylmenaquinone methyltransferase from Leptospira interrogans serogroup Icterohaemorrhagiae serovar copenhageni (strain Fiocruz L1-130).